The following is a 470-amino-acid chain: Protein C-ets-2 (470 aa).

A PNT domain is found at 85-170 (ATFSGFKKEQ…EHLEQMIKEN (86 aa)). Ser225 carries the phosphoserine modification. The segment at 270-291 (ASGKPRDHDSAETGGDSFESSE) is disordered. 3 positions are modified to phosphoserine: Ser296, Ser299, and Ser302. Positions 364-444 (IQLWQFLLEL…SGKRYVYRFV (81 aa)) form a DNA-binding region, ETS.

The protein belongs to the ETS family. Phosphorylation by CDK10 at Ser-225 may create a phosphodegron that targets ETS2 for proteasomal degradation.

It localises to the nucleus. Its function is as follows. Transcription factor activating transcription. Binds specifically the GGA DNA motif in gene promoters and stimulates transcription of those genes. This chain is Protein C-ets-2 (ETS2), found in Bos taurus (Bovine).